Consider the following 135-residue polypeptide: Large ribosomal subunit protein uL22c (135 aa).

Belongs to the universal ribosomal protein uL22 family. As to quaternary structure, part of the 50S ribosomal subunit.

The protein resides in the plastid. Its function is as follows. This protein binds specifically to 23S rRNA. In terms of biological role, the globular domain of the protein is located near the polypeptide exit tunnel on the outside of the subunit, while an extended beta-hairpin is found that lines the wall of the exit tunnel in the center of the 70S ribosome. In Cuscuta exaltata (Tall dodder), this protein is Large ribosomal subunit protein uL22c (rpl22).